We begin with the raw amino-acid sequence, 259 residues long: (3R)-3-hydroxyacyl-CoA dehydrogenase (259 aa).

NAD(+) contacts are provided by residues 13 to 21 and 40 to 41; these read LVTGAGSGI and DL. Ser58 bears the Phosphoserine mark. Residue Lys66 is modified to N6-acetyllysine. 72-74 contributes to the NAD(+) binding site; the sequence is ADV. Residue Ser154 participates in substrate binding. N6-succinyllysine is present on Lys158. The active-site Proton acceptor is the Tyr167. Residues 167-171 and 200-202 contribute to the NAD(+) site; these read YASSK and IAT. Lys171 bears the N6-succinyllysine mark.

It belongs to the short-chain dehydrogenases/reductases (SDR) family. In terms of assembly, heterotetramer with CBR4; contains two molecules of HSD17B8 and CBR4. As to expression, expressed in ovary at protein level.

It is found in the mitochondrion matrix. It catalyses the reaction a (3R)-3-hydroxyacyl-CoA + NAD(+) = a 3-oxoacyl-CoA + NADH + H(+). The enzyme catalyses 17beta-estradiol + NAD(+) = estrone + NADH + H(+). It carries out the reaction testosterone + NAD(+) = androst-4-ene-3,17-dione + NADH + H(+). The catalysed reaction is 17beta-hydroxy-5alpha-androstan-3-one + NAD(+) = 5alpha-androstan-3,17-dione + NADH + H(+). It functions in the pathway steroid biosynthesis; estrogen biosynthesis. It participates in lipid metabolism; fatty acid biosynthesis. Its pathway is lipid metabolism; mitochondrial fatty acid beta-oxidation. Functionally, required for the solubility and assembly of the heterotetramer 3-ketoacyl-[acyl carrier protein] (ACP) reductase functional complex (KAR or KAR1) that forms part of the mitochondrial fatty acid synthase (mtFAS). Alpha-subunit of the KAR complex that acts as scaffold protein required for the stability of carbonyl reductase type-4 (CBR4, beta-subunit of the KAR complex) and for its 3-ketoacyl-ACP reductase activity, thereby participating in mitochondrial fatty acid biosynthesis. Catalyzes the NAD-dependent conversion of (3R)-3-hydroxyacyl-CoA into 3-ketoacyl-CoA (3-oxoacyl-CoA) with no chain length preference; this enzymatic activity is not needed for the KAR function. Prefers (3R)-3-hydroxyacyl-CoA over (3S)-3-hydroxyacyl-CoA and displays enzymatic activity only in the presence of NAD(+). Cooperates with enoyl-CoA hydratase 1 in mitochondria, together they constitute an alternative route to the auxiliary enzyme pathways for the breakdown of Z-PUFA (cis polyunsaturated fatty acid) enoyl-esters. NAD-dependent 17-beta-hydroxysteroid dehydrogenase with highest activity towards estradiol (17beta-estradiol or E2). Has very low activity towards testosterone and dihydrotestosterone (17beta-hydroxy-5alpha-androstan-3-one). Primarily an oxidative enzyme, it can switch to a reductive mode determined in the appropriate physiologic milieu and catalyze the reduction of estrone (E1) to form biologically active 17beta-estradiol. The chain is (3R)-3-hydroxyacyl-CoA dehydrogenase (Hsd17b8) from Rattus norvegicus (Rat).